The primary structure comprises 351 residues: S-adenosylmethionine:tRNA ribosyltransferase-isomerase (351 aa).

It belongs to the QueA family. Monomer.

It localises to the cytoplasm. It carries out the reaction 7-aminomethyl-7-carbaguanosine(34) in tRNA + S-adenosyl-L-methionine = epoxyqueuosine(34) in tRNA + adenine + L-methionine + 2 H(+). It participates in tRNA modification; tRNA-queuosine biosynthesis. Its function is as follows. Transfers and isomerizes the ribose moiety from AdoMet to the 7-aminomethyl group of 7-deazaguanine (preQ1-tRNA) to give epoxyqueuosine (oQ-tRNA). The protein is S-adenosylmethionine:tRNA ribosyltransferase-isomerase of Fusobacterium nucleatum subsp. nucleatum (strain ATCC 25586 / DSM 15643 / BCRC 10681 / CIP 101130 / JCM 8532 / KCTC 2640 / LMG 13131 / VPI 4355).